The following is a 184-amino-acid chain: ATP synthase subunit delta (184 aa).

This sequence belongs to the ATPase delta chain family. As to quaternary structure, F-type ATPases have 2 components, F(1) - the catalytic core - and F(0) - the membrane proton channel. F(1) has five subunits: alpha(3), beta(3), gamma(1), delta(1), epsilon(1). F(0) has three main subunits: a(1), b(2) and c(10-14). The alpha and beta chains form an alternating ring which encloses part of the gamma chain. F(1) is attached to F(0) by a central stalk formed by the gamma and epsilon chains, while a peripheral stalk is formed by the delta and b chains.

The protein resides in the cell inner membrane. F(1)F(0) ATP synthase produces ATP from ADP in the presence of a proton or sodium gradient. F-type ATPases consist of two structural domains, F(1) containing the extramembraneous catalytic core and F(0) containing the membrane proton channel, linked together by a central stalk and a peripheral stalk. During catalysis, ATP synthesis in the catalytic domain of F(1) is coupled via a rotary mechanism of the central stalk subunits to proton translocation. In terms of biological role, this protein is part of the stalk that links CF(0) to CF(1). It either transmits conformational changes from CF(0) to CF(1) or is implicated in proton conduction. In Rickettsia rickettsii (strain Iowa), this protein is ATP synthase subunit delta.